Reading from the N-terminus, the 68-residue chain is Inhibitor of trypsin and hageman factor (68 aa).

Serine 1 bears the N-acetylserine mark. A disulfide bridge links cysteine 3 with cysteine 48.

This sequence belongs to the protease inhibitor I13 (potato type I serine protease inhibitor) family.

Specifically inhibits both trypsin and activated Hageman factor. The sequence is that of Inhibitor of trypsin and hageman factor from Cucurbita maxima (Pumpkin).